The following is a 487-amino-acid chain: MDALLTKFNEDRSLQDENLSQPRTRVRIVDDNLYNKSNPFQLCYKKRDYGSQYYHIYQYRLKTFRERVLKECDKRWDAGFTLNGQLVLKKDKVLDIQGNQPCWCVGSIYCEMKYKPNVLDEVINDTYGAPDLTKSYTDKEGGSDEIMLEDESGRVLLVGDFIRSTPFITGVVVGILGMEAEAGTFQVLDICYPTPLPQNPFPAPIATCPTRGKIALVSGLNLNNTSPDRLLRLEILREFLMGRINNKIDDISLIGRLLICGNSVDFDIKSVNKDELMISLTEFSKFLHNILPSISVDIMPGTNDPSDKSLPQQPFHKSLFDKSLESYFNGSNKEILNLVTNPYEFSYNGVDVLAVSGKNINDICKYVIPSNDNGESENKVEEGESNDFKDDIEHRLDLMECTMKWQNIAPTAPDTLWCYPYTDKDPFVLDKWPHVYIVANQPYFGTRVVEIGGKNIKIISVPEFSSTGMIILLDLETLEAETVKIDI.

Met1 is subject to N-acetylmethionine. Ser20 is subject to Phosphoserine.

Belongs to the DNA polymerase delta/II small subunit family. As to quaternary structure, DNA polymerase delta is a heterotrimer of POL3, POL32 and HYS2.

The protein localises to the nucleus. The enzyme catalyses DNA(n) + a 2'-deoxyribonucleoside 5'-triphosphate = DNA(n+1) + diphosphate. Functionally, DNA polymerase delta (DNA polymerase III) participates in chromosomal DNA replication. It is required during synthesis of the leading and lagging DNA strands at the replication fork and binds at/or near replication origins and moves along DNA with the replication fork. It has 3'-5' proofreading exonuclease activity that correct errors arising during DNA replication. It is also involved in DNA synthesis during DNA repair. This Saccharomyces cerevisiae (strain ATCC 204508 / S288c) (Baker's yeast) protein is DNA polymerase delta small subunit (POL31).